The following is a 788-amino-acid chain: Protein translocase subunit SecA 2 (788 aa).

ATP is bound by residues Gln-86, 104–108, and Asp-493; that span reads GEGKT.

The protein belongs to the SecA family. As to quaternary structure, monomer and homodimer. Part of the essential Sec protein translocation apparatus which comprises SecA, SecYEG and auxiliary proteins SecDF. Other proteins may also be involved.

It is found in the cell membrane. It localises to the cytoplasm. The enzyme catalyses ATP + H2O + cellular proteinSide 1 = ADP + phosphate + cellular proteinSide 2.. Part of the Sec protein translocase complex. Interacts with the SecYEG preprotein conducting channel. Has a central role in coupling the hydrolysis of ATP to the transfer of proteins into and across the cell membrane, serving as an ATP-driven molecular motor driving the stepwise translocation of polypeptide chains across the membrane. This chain is Protein translocase subunit SecA 2, found in Bacillus thuringiensis (strain Al Hakam).